A 283-amino-acid polypeptide reads, in one-letter code: ATP phosphoribosyltransferase (283 aa).

This sequence belongs to the ATP phosphoribosyltransferase family. Long subfamily. It depends on Mg(2+) as a cofactor.

It localises to the cytoplasm. The catalysed reaction is 1-(5-phospho-beta-D-ribosyl)-ATP + diphosphate = 5-phospho-alpha-D-ribose 1-diphosphate + ATP. Its pathway is amino-acid biosynthesis; L-histidine biosynthesis; L-histidine from 5-phospho-alpha-D-ribose 1-diphosphate: step 1/9. With respect to regulation, feedback inhibited by histidine. Catalyzes the condensation of ATP and 5-phosphoribose 1-diphosphate to form N'-(5'-phosphoribosyl)-ATP (PR-ATP). Has a crucial role in the pathway because the rate of histidine biosynthesis seems to be controlled primarily by regulation of HisG enzymatic activity. This Rhodococcus erythropolis (strain PR4 / NBRC 100887) protein is ATP phosphoribosyltransferase.